A 525-amino-acid chain; its full sequence is GMP synthase [glutamine-hydrolyzing] (525 aa).

Residues 8 to 207 (KILILDFGSQ…ALDICGCAAN (200 aa)) enclose the Glutamine amidotransferase type-1 domain. The active-site Nucleophile is the Cys85. Catalysis depends on residues His181 and Glu183. A GMPS ATP-PPase domain is found at 208–400 (WKPSSIIEDA…LGLPYNMLYR (193 aa)). 235-241 (SGGVDSS) contacts ATP.

In terms of assembly, homodimer.

It carries out the reaction XMP + L-glutamine + ATP + H2O = GMP + L-glutamate + AMP + diphosphate + 2 H(+). The protein operates within purine metabolism; GMP biosynthesis; GMP from XMP (L-Gln route): step 1/1. Its function is as follows. Catalyzes the synthesis of GMP from XMP. This Shewanella baltica (strain OS223) protein is GMP synthase [glutamine-hydrolyzing].